The primary structure comprises 135 residues: Small ribosomal subunit protein bS16 (135 aa).

This sequence belongs to the bacterial ribosomal protein bS16 family.

The chain is Small ribosomal subunit protein bS16 from Prosthecochloris aestuarii (strain DSM 271 / SK 413).